We begin with the raw amino-acid sequence, 170 residues long: Large ribosomal subunit protein uL5 (170 aa).

Belongs to the universal ribosomal protein uL5 family. As to quaternary structure, component of the large ribosomal subunit.

It localises to the nucleus. Its subcellular location is the cytoplasm. Functionally, component of the ribosome, a large ribonucleoprotein complex responsible for the synthesis of proteins in the cell. The small ribosomal subunit (SSU) binds messenger RNAs (mRNAs) and translates the encoded message by selecting cognate aminoacyl-transfer RNA (tRNA) molecules. The large subunit (LSU) contains the ribosomal catalytic site termed the peptidyl transferase center (PTC), which catalyzes the formation of peptide bonds, thereby polymerizing the amino acids delivered by tRNAs into a polypeptide chain. The nascent polypeptides leave the ribosome through a tunnel in the LSU and interact with protein factors that function in enzymatic processing, targeting, and the membrane insertion of nascent chains at the exit of the ribosomal tunnel. The polypeptide is Large ribosomal subunit protein uL5 (RPL11) (Chlamydomonas reinhardtii (Chlamydomonas smithii)).